Reading from the N-terminus, the 94-residue chain is Large ribosomal subunit protein bL25 (94 aa).

A disordered region spans residues 1–20; the sequence is MFKFNAEVRQSQGKGASRRL.

Belongs to the bacterial ribosomal protein bL25 family. In terms of assembly, part of the 50S ribosomal subunit; part of the 5S rRNA/L5/L18/L25 subcomplex. Contacts the 5S rRNA. Binds to the 5S rRNA independently of L5 and L18.

This is one of the proteins that binds to the 5S RNA in the ribosome where it forms part of the central protuberance. The chain is Large ribosomal subunit protein bL25 from Pasteurella multocida (strain Pm70).